Reading from the N-terminus, the 1062-residue chain is MACFSNETQIEIDVHDLVEAPIRYDSIESIYSIPSSALCCVNAVGSHSLMSKKVKAQKLPMIEQFEIEGSGVSASDDCCRSDDYKLRIQRPEIVRVYYRRRKRPLRECLLDQAVAVKTESVELDEIDCFEEKKRRKIGNCELVKSGMESIGLRRCKENNAFSGNKQNGSSRRKGSSSKNQDKATLASRSAKKWVRLSYDGVDPTSFIGLQCKVFWPLDALWYEGSIVGYSAERKRYTVKYRDGCDEDIVFDREMIKFLVSREEMELLHLKFCTSNVTVDGRDYDEMVVLAATLDECQDFEPGDIVWAKLAGHAMWPAVIVDESIIGERKGLNNKVSGGGSLLVQFFGTHDFARIKVKQAISFIKGLLSPSHLKCKQPRFEEGMQEAKMYLKAHRLPERMSQLQKGADSVDSDMANSTEEGNSGGDLLNDGEVWLRPTEHVDFRHIIGDLLIINLGKVVTDSQFFKDENHIWPEGYTAMRKFTSLTDHSASALYKMEVLRDAETKTHPLFIVTADSGEQFKGPTPSACWNKIYNRIKKVQNSDSPNILGEELNGSGTDMFGLSNPEVIKLVQDLSKSRPSSHVSMCKNSLGRHQNQPTGYRPVRVDWKDLDKCNVCHMDEEYENNLFLQCDKCRMMVHAKCYGELEPCDGALWLCNLCRPGAPDMPPRCCLCPVVGGAMKPTTDGRWAHLACAIWIPETCLSDVKKMEPIDGVNKVSKDRWKLMCTICGVSYGACIQCSNNSCRVAYHPLCARAAGLCVELENDMSVEGEEADQCIRMLSFCKRHRQTSTACLGSEDRIKSATHKTSEYLPPPNPSGCARTEPYNCFGRRGRKEPEALAAASSKRLFVENQPYVIGGYSRLEFSTYKSIHGSKVSQMNTPSNILSMAEKYRYMRETYRKRLAFGKSGIHGFGIFAKLPHRAGDMMIEYTGELVRPSIADKREQLIYNSMVGAGTYMFRIDDERVIDATRTGSIAHLINHSCVPNCYSRVITVNGDEHIIIFAKRHIPKWEELTYDYRFFSIGERLSCSCGFPGCRGVVNDTEAEEQHAKICVPRCDLIDWTAE.

Positions 159 to 184 (NAFSGNKQNGSSRRKGSSSKNQDKAT) are disordered. The PWWP domain maps to 301–365 (PGDIVWAKLA…VKQAISFIKG (65 aa)). A disordered region spans residues 401-424 (QLQKGADSVDSDMANSTEEGNSGG). The FYR N-terminal domain maps to 441–500 (DFRHIIGDLLIINLGKVVTDSQFFKDENHIWPEGYTAMRKFTSLTDHSASALYKMEVLRD). One can recognise an FYR C-terminal domain in the interval 504-586 (KTHPLFIVTA…RPSSHVSMCK (83 aa)). The Phorbol-ester/DAG-type zinc finger occupies 591-647 (RHQNQPTGYRPVRVDWKDLDKCNVCHMDEEYENNLFLQCDKCRMMVHAKCYGELEPC). An interaction with PIP5 region spans residues 599–1062 (YRPVRVDWKD…RCDLIDWTAE (464 aa)). Residues 609 to 660 (LDKCNVCHMDEEYENNLFLQCDKCRMMVHAKCYGELEPCDGALWLCNLCRPG) form a PHD-type 1 zinc finger. A C2HC pre-PHD-type zinc finger spans residues 665 to 698 (PPRCCLCPVVGGAMKPTTDGRWAHLACAIWIPET). The PHD-type 2 zinc-finger motif lies at 722-785 (LMCTICGVSY…RMLSFCKRHR (64 aa)). The SET domain occupies 898-1016 (KRLAFGKSGI…KWEELTYDYR (119 aa)). S-adenosyl-L-methionine is bound at residue H908. O-linked (GlcNAc) serine glycosylation occurs at S947. S-adenosyl-L-methionine is bound by residues Y954 and 977-978 (NH). Residues C980, C1026, C1028, and C1033 each contribute to the Zn(2+) site. A Post-SET domain is found at 1022-1038 (ERLSCSCGFPGCRGVVN).

It belongs to the class V-like SAM-binding methyltransferase superfamily. Histone-lysine methyltransferase family. TRX/MLL subfamily. Interacts with PIP5. Interacts with WDR5A. Binds to CLF in the nucleus. Interacts with NRPB1 CTD domain, especially when NRPB1 is phosphorylated on 'Ser-5' of the heptapeptide repeat. Component of a nuclear protein complex containing at least TATA binding proteins (TBPs, e.g. TBP1 and TBP2) and ATX1. Associates with ULT1 for trimethylating 'Lys-4' on histone H3 (H3K4me3) at flower MADS box gene loci. Interacts with SEC. In terms of assembly, interacts with A4/EF1A in the cytoplasm on the nuclear periphery. In terms of processing, activated via O-glycosylation by SEC; this modification triggers FLC locus H3K4me3 histone modification, thus preventing premature flowering. In terms of tissue distribution, strongly expressed in cotyledons, but weak levels in the first true leaves, except at the hydothodes. Ubiquitous with higher levels in dividing tissues, including inflorescence meristem and flower primordia. Expressed also in leaves (especially at hydathodes), in growing inflorescence stems and in the mature flowers. As to expression, strongly expressed in young seedlings.

The protein localises to the nucleus. Its subcellular location is the cytoplasm. It is found in the perinuclear region. It catalyses the reaction L-lysyl(4)-[histone H3] + 3 S-adenosyl-L-methionine = N(6),N(6),N(6)-trimethyl-L-lysyl(4)-[histone H3] + 3 S-adenosyl-L-homocysteine + 3 H(+). The enzyme catalyses L-lysyl-[protein] + 3 S-adenosyl-L-methionine = N(6),N(6),N(6)-trimethyl-L-lysyl-[protein] + 3 S-adenosyl-L-homocysteine + 3 H(+). Functionally, binds to the promoter and regulates the transcription of target genes, maintaining them in an active state; at promoters, required for TATA binding proteins (TBPs, e.g. TBP1 and TBP2) and RNA polymerase II (Pol II) recruitment, and, in a subsequent event, is recruited by a phosphorylated form of Pol II to the +300-bp region of transcribed sequences to trimethylates nucleosomes. Histone trimethyltransferase that trimethylates 'Lys-4' of histone H3 (H3K4me3); H3 'Lys-4' methylation represents a specific tag for epigenetic transcriptional activation and is required for efficient elongation of transcription but not for transcription initiation. Methylates only a limited fraction of nucleosomes of target genes (e.g. FLC, NAP, XTH33 and WRKY70). Necessary for WDR5A occupancy at WRKY70 and LTP7 genes. Required to maintain the active state of class A (AP1 and AP2), class B (PI and AP3) and class C (AG, AGAMOUS) floral homeotic genes at early stages of flower development. Together with CLF, modulates AG nucleosome methylation statement. Involved in epigenetic regulation (e.g. H3K4me3) of the floral repressors FLC, FT and SOC1 to prevent the transition from vegetative to reproductive development, independently of the photoperiod; binds the active FLC locus before flowering, but this interaction is released upon the transition to flowering. Regulates floral organ identity and flowering transition. Functions as a receptor for the lipid messenger phosphatidylinositol 5-phosphate (PI5P), which negatively regulates its transcriptional activation activity. Exhibits histone methylase activity and subsequent transcriptional regulation on WRKY70 gene, and, to a lower extent on secondary defense-response targets salicylic acid (SA)-responsive gene PR1 and jasmonic acid (JA)-responsive gene THI2.1. Involved in response to dehydration stress-response in both abscisic acid (ABA)-dependent and ABA-independent pathways; this includes specific genes (e.g. COR15A, ADH1, CBF4, RD29A, RD29B, RD26, ABF3, NCED3 and ABA3) epigenetic regulation (e.g. H3K4me3 and Pol II recruitment) to promote their transcription and influence ABA production. Implicated in stomatal closure regulation. Indirect repressor of XTH genes (XTH33). Necessary for the phosphorylation of Pol II NRPB1 (e.g. Ser5P and Ser2P) at the promoters of target genes, thus regulating both early and late stages of transcription. Controls root growth and architecture by regulating the timing of root development, stem cell niche maintenance (e.g. quiescent center (QC)), and cell patterning during primary and lateral root development. Modulates cell cycle duration, cell production, and the transition from cell proliferation in the root apical meristem (RAM) to cell elongation. In terms of biological role, trimethylates A4/EF1A post-translationally at Lys-396. Required for actin cytoskeleton organization. The chain is Histone H3-lysine(4) N-trimethyltransferase ATX1 from Arabidopsis thaliana (Mouse-ear cress).